The primary structure comprises 140 residues: Ribosome-binding factor A (140 aa).

The protein belongs to the RbfA family. Monomer. Binds 30S ribosomal subunits, but not 50S ribosomal subunits or 70S ribosomes.

It is found in the cytoplasm. Functionally, one of several proteins that assist in the late maturation steps of the functional core of the 30S ribosomal subunit. Associates with free 30S ribosomal subunits (but not with 30S subunits that are part of 70S ribosomes or polysomes). Required for efficient processing of 16S rRNA. May interact with the 5'-terminal helix region of 16S rRNA. In Cereibacter sphaeroides (strain ATCC 17023 / DSM 158 / JCM 6121 / CCUG 31486 / LMG 2827 / NBRC 12203 / NCIMB 8253 / ATH 2.4.1.) (Rhodobacter sphaeroides), this protein is Ribosome-binding factor A.